Here is a 67-residue protein sequence, read N- to C-terminus: Protein AaeX (67 aa).

The next 2 helical transmembrane spans lie at 3-23 (VLPVFVMFGLSFPPVFIELII) and 43-63 (LVWHPALFNTALYCCVFYLVS).

This sequence belongs to the AaeX family.

It localises to the cell membrane. The protein is Protein AaeX of Pantoea vagans (strain C9-1) (Pantoea agglomerans (strain C9-1)).